Consider the following 860-residue polypeptide: Protein argonaute-2 (860 aa).

Position 2 is a 3'-nitrotyrosine (Tyr2). One can recognise a PAZ domain in the interval 230 to 349 (PVIEFVCEVL…LPLEVCNIVA (120 aa)). Positions 312 to 317 (YFKDRH) are interaction with guide RNA. At Ser388 the chain carries Phosphoserine. A Piwi domain is found at 518-819 (LVVVILPGKT…VAFRARYHLV (302 aa)). The interval 525 to 567 (GKTPVYAEVKRVGDTVLGMATQCVQMKNVQRTTPQTLSNLCLK) is interaction with guide RNA. The interaction with GW182 family members stretch occupies residues 588-591 (FQQP). Asp598 lines the a divalent metal cation pocket. An interaction with GW182 family members region spans residues 651 to 661 (LIQFYKSTRFK). Residue Asp670 coordinates a divalent metal cation. Pro701 carries the post-translational modification 4-hydroxyproline. Interaction with guide RNA stretches follow at residues 710-711 (KR), 754-762 (HAGIQGTSR), and 791-813 (YVRC…VAFR). His808 contributes to the a divalent metal cation binding site. Phosphoserine occurs at positions 825, 829, 832, and 835.

This sequence belongs to the argonaute family. Ago subfamily. As to quaternary structure, interacts with DICER1 through its Piwi domain and with TARBP2 during assembly of the RNA-induced silencing complex (RISC). Together, DICER1, AGO2 and TARBP2 constitute the trimeric RISC loading complex (RLC), or micro-RNA (miRNA) loading complex (miRLC). Within the RLC/miRLC, DICER1 and TARBP2 are required to process precursor miRNAs (pre-miRNAs) to mature miRNAs and then load them onto AGO2. AGO2 bound to the mature miRNA constitutes the minimal RISC and may subsequently dissociate from DICER1 and TARBP2. Note however that the term RISC has also been used to describe the trimeric RLC/miRLC. The formation of RISC complexes containing siRNAs rather than miRNAs appears to occur independently of DICER1. Interacts with AGO1. Also interacts with DDB1, DDX5, DDX6, DDX20, DHX30, DHX36, DDX47, DHX9, ELAVL, FXR1, GEMIN4, HNRNPF, IGF2BP1, ILF3, IMP8, MATR3, PABPC1, PRMT5, P4HA1, P4HB, RBM4, SART3, TNRC6A, TNRC6B, UPF1 and YBX1. Interacts with the P-body components DCP1A and XRN1. Associates with polysomes and messenger ribonucleoproteins (mNRPs). Interacts with RBM4; the interaction is modulated under stress-induced conditions, occurs under both cell proliferation and differentiation conditions and in an RNA- and phosphorylation-independent manner. Interacts with LIMD1, WTIP and AJUBA. Interacts with TRIM71. Interacts with APOBEC3G in an RNA-dependent manner. Interacts with APOBEC3A, APOBEC3C, APOBEC3F and APOBEC3H. Interacts with DICER1, TARBP2, EIF6, MOV10 and RPL7A (60S ribosome subunit); they form a large RNA-induced silencing complex (RISC). Interacts with FMR1. Interacts with ZFP36. Interacts with RC3H1; the interaction is RNA independent. Interacts with ARB2A. Found in a complex composed of AGO2, CHD7 and ARB2A. Interacts with SND1 and SYT11. Interacts with CLNK. Interacts with GARRE1. Interacts with GRB2; this interaction is important for the formation of a ternary complex containing GRB2, AGO2 and DICER1. It depends on Mg(2+) as a cofactor. Mn(2+) is required as a cofactor. In terms of processing, hydroxylated. 4-hydroxylation appears to enhance protein stability but is not required for miRNA-binding or endonuclease activity. Post-translationally, ubiquitinated on surface-exposed lysines by a SCF-like E3 ubiquitin-protein ligase complex containing ZSWIM8 during target-directed microRNA degradation (TDMD), a process that mediates degradation of microRNAs (miRNAs). Ubiquitination by the SCF-like E3 ubiquitin-protein ligase complex containing ZSWIM8 leads to its subsequent degradation, thereby exposing miRNAs for degradation. ZSWIM8 recognizes and binds AGO2 when it is engaged with a TDMD target. Phosphorylation at Ser-388 by AKT3; leads to up-regulate translational repression of microRNA target and down-regulate endonucleolytic cleavage. In terms of processing, a phosphorylation cycle of C-terminal serine cluster (Ser-825-Ser-835) regulates the release of target mRNAs. Target-binding leads to phosphorylation of these residues by CSNK1A1, which reduces the affinity of AGO2 for mRNA and enables target release. The ANKRD52-PPP6C phosphatase complex dephosphorylates the residues, which primes AGO2 for binding a new target. In terms of tissue distribution, ubiquitous expression in 9.5 day embryos with highest levels in forebrain, heart, limb buds, and branchial arches.

It is found in the cytoplasm. Its subcellular location is the P-body. The protein localises to the nucleus. It carries out the reaction Endonucleolytic cleavage to 5'-phosphomonoester.. Functionally, required for RNA-mediated gene silencing (RNAi) by the RNA-induced silencing complex (RISC). The 'minimal RISC' appears to include AGO2 bound to a short guide RNA such as a microRNA (miRNA) or short interfering RNA (siRNA). These guide RNAs direct RISC to complementary mRNAs that are targets for RISC-mediated gene silencing. The precise mechanism of gene silencing depends on the degree of complementarity between the miRNA or siRNA and its target. Binding of RISC to a perfectly complementary mRNA generally results in silencing due to endonucleolytic cleavage of the mRNA specifically by AGO2. Binding of RISC to a partially complementary mRNA results in silencing through inhibition of translation, and this is independent of endonuclease activity. May inhibit translation initiation by binding to the 7-methylguanosine cap, thereby preventing the recruitment of the translation initiation factor eIF4-E. May also inhibit translation initiation via interaction with EIF6, which itself binds to the 60S ribosomal subunit and prevents its association with the 40S ribosomal subunit. The inhibition of translational initiation leads to the accumulation of the affected mRNA in cytoplasmic processing bodies (P-bodies), where mRNA degradation may subsequently occur. In some cases RISC-mediated translational repression is also observed for miRNAs that perfectly match the 3' untranslated region (3'-UTR). Can also up-regulate the translation of specific mRNAs under certain growth conditions. Binds to the AU element of the 3'-UTR of the TNF (TNF-alpha) mRNA and up-regulates translation under conditions of serum starvation. Also required for transcriptional gene silencing (TGS), in which short RNAs known as antigene RNAs or agRNAs direct the transcriptional repression of complementary promoter regions. Regulates lymphoid and erythroid development and function, and this is independent of endonuclease activity. The polypeptide is Protein argonaute-2 (Ago2) (Mus musculus (Mouse)).